The following is a 56-amino-acid chain: UPF0434 protein CbuG_1535 (56 aa).

It belongs to the UPF0434 family.

This is UPF0434 protein CbuG_1535 from Coxiella burnetii (strain CbuG_Q212) (Coxiella burnetii (strain Q212)).